The primary structure comprises 552 residues: MKEFFRPVISNALHSAGITTDKQIIIEQPADKKFGDFSTNIALLAAKECRRNPRELAQTIIEHLSFPPDTIAKIEVAGAGFINFYLTPLFIMQSVEQVLLDGDEYGKGESGKGEKAIVEYVSANPTGPLTIGRGRGGVLGDCIANLFATQGYAVTREYYFNDAGRQMQILGESVRFRYLERCGETIEFPATHYQGEYIGEIAEELFNDHGTALADSTDVQIFKKRAEEIIFASIRKTLERLGIRHDSFFNEHTLYTPDAGGVTGNQRVIDALREKEFIAEYDGATWFLTTKLGQEKDKVLIKSSGEPSYRLPDIAYHITKYERGFGMIVNVFGADHIDEYPDVLEALKILGYDTRHIKIAINQFVTTTVDGQTLKMSTRKGNADLLDDLIDDVGADATRLFFIMRSKDSHLNFDVELAKKQSKDNPVFYLQYAHARICSLLRMAQQEIGFDATSSPELHLLQRLTSPAELQLGSALLDYPDMIKTSLRLLEPQKMVEYLHSLAECFHRFYQECPILKAEPDIARARLFLSVATRQVLRNGFRILGVSAPESM.

The short motif at 123–133 (ANPTGPLTIGR) is the 'HIGH' region element.

It belongs to the class-I aminoacyl-tRNA synthetase family. In terms of assembly, monomer.

It is found in the cytoplasm. It carries out the reaction tRNA(Arg) + L-arginine + ATP = L-arginyl-tRNA(Arg) + AMP + diphosphate. This is Arginine--tRNA ligase from Pelodictyon phaeoclathratiforme (strain DSM 5477 / BU-1).